A 283-amino-acid chain; its full sequence is Pseudokinase OPG198 (283 aa).

M1 and K30 together coordinate ATP. The Protein kinase domain maps to 1 to 283 (MESFKYCFDN…DRLRRLFIQD (283 aa)).

The protein belongs to the protein kinase superfamily. Ser/Thr protein kinase family. Poxviruses subfamily. In terms of assembly, interacts with B1/VPK1. Interacts with host VRK1. Interacts with host VRK2.

Its subcellular location is the host nucleus. Its activity is regulated as follows. Both catalytically active kinases B1/VPK1 and host VRK2 repress B12 inhibitory activity in a B1/VPK1 deletion mutant strain. In terms of biological role, pseudokinase that plays a role in viral DNA replication repression by activating the antiviral protein BANF1 and inhibiting the activity of host VRK1, a cellular modulator of BANF1. The polypeptide is Pseudokinase OPG198 (OPG198) (Vaccinia virus (strain Ankara) (VACV)).